The chain runs to 126 residues: Aspartate 1-decarboxylase (126 aa).

Residue serine 25 is the Schiff-base intermediate with substrate; via pyruvic acid of the active site. Serine 25 bears the Pyruvic acid (Ser) mark. Threonine 57 is a substrate binding site. The Proton donor role is filled by tyrosine 58. 73–75 (GGA) lines the substrate pocket.

It belongs to the PanD family. In terms of assembly, heterooctamer of four alpha and four beta subunits. Pyruvate is required as a cofactor. Is synthesized initially as an inactive proenzyme, which is activated by self-cleavage at a specific serine bond to produce a beta-subunit with a hydroxyl group at its C-terminus and an alpha-subunit with a pyruvoyl group at its N-terminus.

Its subcellular location is the cytoplasm. It carries out the reaction L-aspartate + H(+) = beta-alanine + CO2. It functions in the pathway cofactor biosynthesis; (R)-pantothenate biosynthesis; beta-alanine from L-aspartate: step 1/1. Catalyzes the pyruvoyl-dependent decarboxylation of aspartate to produce beta-alanine. The protein is Aspartate 1-decarboxylase of Stenotrophomonas maltophilia (strain K279a).